Reading from the N-terminus, the 430-residue chain is Dihydroorotase (430 aa).

Zn(2+) contacts are provided by histidine 57 and histidine 59. Residues 59 to 61 (HLR) and asparagine 91 each bind substrate. Positions 151, 178, and 231 each coordinate Zn(2+). Residue asparagine 277 participates in substrate binding. Aspartate 304 is a Zn(2+) binding site. Aspartate 304 is a catalytic residue. Residues histidine 308 and 322–323 (PG) each bind substrate.

The protein belongs to the metallo-dependent hydrolases superfamily. DHOase family. Class I DHOase subfamily. The cofactor is Zn(2+).

It catalyses the reaction (S)-dihydroorotate + H2O = N-carbamoyl-L-aspartate + H(+). The protein operates within pyrimidine metabolism; UMP biosynthesis via de novo pathway; (S)-dihydroorotate from bicarbonate: step 3/3. Functionally, catalyzes the reversible cyclization of carbamoyl aspartate to dihydroorotate. This chain is Dihydroorotase, found in Mycobacterium tuberculosis (strain ATCC 25618 / H37Rv).